The sequence spans 84 residues: Cell division topological specificity factor (84 aa).

This sequence belongs to the MinE family.

Prevents the cell division inhibition by proteins MinC and MinD at internal division sites while permitting inhibition at polar sites. This ensures cell division at the proper site by restricting the formation of a division septum at the midpoint of the long axis of the cell. The polypeptide is Cell division topological specificity factor (Burkholderia ambifaria (strain MC40-6)).